The sequence spans 497 residues: Cytochrome P450 98A8 (497 aa).

The helical transmembrane segment at 2 to 19 (IIYLISLLPIIVATLMLY) threads the bilayer. Cys-431 provides a ligand contact to heme.

Belongs to the cytochrome P450 family. Heme is required as a cofactor. In terms of tissue distribution, strongly expressed in inflorescence tips, young flower buds, seeds, stamen, tapetum and pollen.

It localises to the membrane. Acts redundantly with CYP98A9 as tricoumaroylspermidine meta-hydroxylase. Also catalyzes the meta-hydroxylation of the three triferuloylspermidine phenolic rings. Unable to use 5-O-(4-coumaroyl) D-quinate or 5-O-(4-coumaroyl) shikimate as substrates. The sequence is that of Cytochrome P450 98A8 (CYP98A8) from Arabidopsis thaliana (Mouse-ear cress).